The chain runs to 969 residues: Activity-dependent neuroprotective protein a (969 aa).

The C2H2-type 1 zinc finger occupies 74-97 (FCCSDCPFASKYFSAYKNHFRNVH). The segment at 107–129 (LNCSYCTYSGNKRTLETHVRLFH) adopts a C2H2-type 2; atypical zinc-finger fold. 2 consecutive C2H2-type zinc fingers follow at residues 169–192 (YYCKKCTYRDRLYNVVRRHIYREH) and 221–244 (IHCKSCHFTPRSYEALVQHVIEFH). The C2H2-type 5; atypical zinc finger occupies 401 to 423 (KICTICNELFPESAYSAHFEKEH). The C2H2-type 6; atypical zinc finger occupies 443–464 (SKCLYCNRYLPSDSLLNHMLVH). The segment at 466-489 (LSCPHCHSTFHEVEKIVAHNRLAH) adopts a C2H2-type 7 zinc-finger fold. The C2H2-type 8; atypical zinc-finger motif lies at 583–608 (TLCPLCFTILKGPISDALAHHLRDSH). A C2H2-type 9; atypical zinc finger spans residues 623 to 647 (YKCIHCLGVYTSNMTASTITLHLVH). Residues 659–689 (KPITTGLRSPGAGSLKRELVTPDPSDPKRRK) form a disordered region. The segment at residues 732–774 (AYFNRHPYPSQREVEKLAASLWLWKSDVASHFGNHRRLCDRDF) is a DNA-binding region (homeobox). The interval 911-949 (DVRANRSSPRVGPKVLDGSVSSSSPDEATWSGNMSSEES) is disordered. Residues 929–946 (SVSSSSPDEATWSGNMSS) are compositionally biased toward polar residues.

As to quaternary structure, interacts with catenin beta-1/ctnnb1.

The protein resides in the nucleus. Functionally, may be involved in transcriptional regulation. Positively modulates wnt-beta-catenin/ctnnb1 signaling. Required for embryonic neurogenesis. Required for progression through late erythroid differentiation. The sequence is that of Activity-dependent neuroprotective protein a from Danio rerio (Zebrafish).